An 819-amino-acid chain; its full sequence is Protein SCARECROW (819 aa).

Disordered regions lie at residues 6-49, 65-136, 212-231, and 393-420; these read LFNG…HSER, HNNN…INNN, SQNN…RNNT, and PLST…TTTT. Residues 15–33 show a composition bias toward low complexity; it reads TTPDETNNNSTSNSSNIST. Positions 79 to 98 are enriched in polar residues; that stretch reads RTNNTSSLNCSLPATTQKGV. Positions 99–136 are enriched in low complexity; sequence TTTTTTTLASSGNNNNNNNNNNNYHYHNNNNNSIINNN. A coiled-coil region spans residues 418 to 448; sequence TTTSAELALARKKKEEIKEQKKKDEEGLHLL. The GRAS domain maps to 438 to 806; sequence KKKDEEGLHL…LCLLTASAWR (369 aa). Residues 445-507 form a leucine repeat I (LRI) region; sequence LHLLTLLLQC…RLVSSCLGIY (63 aa). Residues 452 to 456 carry the LxCxE motif motif; that stretch reads LQCAE. The interval 526-591 is VHIID; sequence FQVFNGISPF…GGPPYVRLTG (66 aa). Positions 557–561 match the VHIID motif; the sequence is VHIID. The segment at 601 to 633 is leucine repeat II (LRII); sequence ATGKRLSDFANKLGLPFEFFPVAEKVGNIDVEK. The interval 642–729 is PFYRE; it reads VAVHWLQHSL…QQLLSREIRN (88 aa). Residues 732 to 806 form an SAW region; the sequence is AVGGPSRSGE…LCLLTASAWR (75 aa).

This sequence belongs to the GRAS family. As to expression, expressed in shoot apical meristem, leaf primordia, between the cortex and the differentiating vessels in lower shoots and in root endodermis.

The protein resides in the nucleus. Functionally, putative transcription factor involved in asymmetric cell division. This chain is Protein SCARECROW (SCR), found in Pisum sativum (Garden pea).